Reading from the N-terminus, the 182-residue chain is MNQTIISAATEGTNPLVPNPWEMGVVLAGFAVLFYIVVKFVVPMFEKTFAERAEAIEGGIAKAEKAQAEASAALEEYKQQLTDARAEANRIREEARAEGAQILADLKEKAAAESARITAHAHAQIESERQAAVVSLRAEVGTLATTLASRIVGESLSDDARAARVVDRFLADLENQNAGAAK.

Residues 25-45 (VVLAGFAVLFYIVVKFVVPMF) form a helical membrane-spanning segment.

It belongs to the ATPase B chain family. In terms of assembly, F-type ATPases have 2 components, F(1) - the catalytic core - and F(0) - the membrane proton channel. F(1) has five subunits: alpha(3), beta(3), gamma(1), delta(1), epsilon(1). F(0) has three main subunits: a(1), b(2) and c(10-14). The alpha and beta chains form an alternating ring which encloses part of the gamma chain. F(1) is attached to F(0) by a central stalk formed by the gamma and epsilon chains, while a peripheral stalk is formed by the delta and b chains.

The protein resides in the cell membrane. In terms of biological role, f(1)F(0) ATP synthase produces ATP from ADP in the presence of a proton or sodium gradient. F-type ATPases consist of two structural domains, F(1) containing the extramembraneous catalytic core and F(0) containing the membrane proton channel, linked together by a central stalk and a peripheral stalk. During catalysis, ATP synthesis in the catalytic domain of F(1) is coupled via a rotary mechanism of the central stalk subunits to proton translocation. Functionally, component of the F(0) channel, it forms part of the peripheral stalk, linking F(1) to F(0). The polypeptide is ATP synthase subunit b (Arthrobacter sp. (strain FB24)).